A 241-amino-acid chain; its full sequence is B-cell receptor-associated protein 29 (241 aa).

Residues 1-6 lie on the Lumenal side of the membrane; the sequence is MTLQWA. A helical membrane pass occupies residues 7–27; sequence AVATFLYAEIGLILIFCLPFI. Residues 28-43 are Cytoplasmic-facing; sequence PPQRWQKIFSFNVWGK. A helical transmembrane segment spans residues 44 to 64; sequence IATFWNKAFLTIIILLIVLFL. The Lumenal segment spans residues 65-103; the sequence is DAVREVRKYSSVHTIEKSSTSRPDAYEHTQMKLFRSQRN. The chain crosses the membrane as a helical span at residues 104–124; that stretch reads LYISGFSLFFWLVLRRLVTLI. The Cytoplasmic segment spans residues 125-241; the sequence is TQLAKELSNK…RLERGNKKRL (117 aa). Residues 166-233 adopt a coiled-coil conformation; that stretch reads GKDEECVLEA…KEHSELQDRL (68 aa). The segment at 193–223 is disordered; that stretch reads KTSDALSKAQNDVMEMKMQSERLSKEYDQLL. The span at 206–223 shows a compositional bias: basic and acidic residues; sequence MEMKMQSERLSKEYDQLL. The short motif at 238-241 is the Di-lysine motif element; that stretch reads KKRL.

This sequence belongs to the BCAP29/BCAP31 family. In terms of assembly, homodimer and heterodimer with BCAP31. Binds CASP8 as a complex containing BCAP31, BCAP29, BCL2 and/or BCL2L1. Interacts with VAMP3, VAMP1 and membrane IgD immunoglobulins. May interact with ACTG1 and non-muscle myosin II.

The protein resides in the endoplasmic reticulum membrane. Its function is as follows. May play a role in anterograde transport of membrane proteins from the endoplasmic reticulum to the Golgi. May be involved in CASP8-mediated apoptosis. The protein is B-cell receptor-associated protein 29 (BCAP29) of Pongo abelii (Sumatran orangutan).